The following is a 262-amino-acid chain: Putative dimethyl sulfoxide reductase iron-sulfur subunit B (262 aa).

3 consecutive 4Fe-4S ferredoxin-type domains span residues 4–34 (YGLV…MGQF), 62–93 (LEMT…TRDD), and 94–123 (GIVE…FNWD). Residues C13, C16, C19, C23, C71, C74, C79, C83, C103, C106, C109, C113, C147, C150, C162, and C166 each contribute to the [4Fe-4S] cluster site. The segment at 209–262 (NGEMSPGRPWKSKKLESELDDDEAAKAARRRSGSVENGYDVTPHVPAETAGGDD) is disordered.

Probable multiprotein complex that likely consists of DmsA, DmsB and DmsC. Requires [4Fe-4S] cluster as cofactor.

It localises to the cell membrane. Dimethyl sulfoxide (DMSO) reductase catalyzes the reduction of dimethyl sulfoxide (DMSO) to dimethyl sulfide (DMS) during anaerobic respiration; it can also use trimethylamine N-oxide (TMAO) as terminal electron acceptor. Subunit B is proposed to be involved in electron transfer. The polypeptide is Putative dimethyl sulfoxide reductase iron-sulfur subunit B (dmsB) (Halobacterium salinarum (strain ATCC 700922 / JCM 11081 / NRC-1) (Halobacterium halobium)).